Consider the following 165-residue polypeptide: MSATAEDNARGAKPAGNFARTVSQRKRKRLFLIGGALAVLAVAVGLMLMAFSQDIRFFRTPADLTEQDMASGSRFRLGGLVEEGSVSREGSELRFTVTDTIKTVKVVFEGIPPDLFREGQGVVAEGRFGDDGVFRADNVLAKHDENYVPKDLADSLKEKGVWEGK.

Topologically, residues 1 to 29 (MSATAEDNARGAKPAGNFARTVSQRKRKR) are cytoplasmic. The chain crosses the membrane as a helical; Signal-anchor for type II membrane protein span at residues 30–50 (LFLIGGALAVLAVAVGLMLMA). The Periplasmic segment spans residues 51–165 (FSQDIRFFRT…LKEKGVWEGK (115 aa)). Residues histidine 143 and tyrosine 147 each coordinate heme.

The protein belongs to the CcmE/CycJ family.

It is found in the cell inner membrane. Functionally, heme chaperone required for the biogenesis of c-type cytochromes. Transiently binds heme delivered by CcmC and transfers the heme to apo-cytochromes in a process facilitated by CcmF and CcmH. The polypeptide is Cytochrome c-type biogenesis protein CcmE (Brucella anthropi (strain ATCC 49188 / DSM 6882 / CCUG 24695 / JCM 21032 / LMG 3331 / NBRC 15819 / NCTC 12168 / Alc 37) (Ochrobactrum anthropi)).